The following is a 303-amino-acid chain: Sulfate adenylyltransferase subunit 2 (303 aa).

This sequence belongs to the PAPS reductase family. CysD subfamily. As to quaternary structure, heterodimer composed of CysD, the smaller subunit, and CysN.

It carries out the reaction sulfate + ATP + H(+) = adenosine 5'-phosphosulfate + diphosphate. Its pathway is sulfur metabolism; hydrogen sulfide biosynthesis; sulfite from sulfate: step 1/3. Its function is as follows. With CysN forms the ATP sulfurylase (ATPS) that catalyzes the adenylation of sulfate producing adenosine 5'-phosphosulfate (APS) and diphosphate, the first enzymatic step in sulfur assimilation pathway. APS synthesis involves the formation of a high-energy phosphoric-sulfuric acid anhydride bond driven by GTP hydrolysis by CysN coupled to ATP hydrolysis by CysD. The chain is Sulfate adenylyltransferase subunit 2 from Akkermansia muciniphila (strain ATCC BAA-835 / DSM 22959 / JCM 33894 / BCRC 81048 / CCUG 64013 / CIP 107961 / Muc).